Here is a 991-residue protein sequence, read N- to C-terminus: Pro-apoptotic serine protease NMA111 (991 aa).

A disordered region spans residues 1 to 57; that stretch reads MTVGKRKLSNGTVNEAKRLDDHVPVVAPSTNPDFENANGEDNEDIDDYSSEGEMSPQ. Over residues 38–50 the composition is skewed to acidic residues; the sequence is NGEDNEDIDDYSS. A serine protease region spans residues 86 to 269; sequence HVSNFDTESS…LPVYRPLRAL (184 aa). Residues His117, Asp148, and Ser231 each act as charge relay system in the active site. 2 PDZ domains span residues 296 to 374 and 885 to 957; these read RRLG…QRNG and PHHG…VSFD.

The protein belongs to the peptidase S1C family.

The protein resides in the nucleus. Functionally, nuclear serine protease which mediates apoptosis. The chain is Pro-apoptotic serine protease NMA111 (NMA111) from Meyerozyma guilliermondii (strain ATCC 6260 / CBS 566 / DSM 6381 / JCM 1539 / NBRC 10279 / NRRL Y-324) (Yeast).